Here is a 213-residue protein sequence, read N- to C-terminus: MGHLDLAALREEYARAGLDEADLAPDPIAMFDRWMGEAHDAIRHDANAMVLSTVGPDLAPSSRMLLLKGVAEDGFVFFTNTASLKGHELAANPRCSLLFPWHPLERQVRVDGVAAPLPRADVEAYFASRPRASQLGAWASHQSEVVSGRAELEAAYAAAEVRYPDQVPTPEEWGGYVVRPEVVEFWQGRTGRLHDRLRYRRTPGGWVTERLAP.

Residues 10–13 and K68 each bind substrate; that span reads REEY. FMN contacts are provided by residues 63–68, 78–79, K85, and Q107; these read RMLLLK and FT. Substrate-binding residues include Y125, R129, and S133. Residues 142 to 143 and W186 each bind FMN; that span reads QS. 192–194 is a binding site for substrate; it reads RLH. R196 contributes to the FMN binding site.

This sequence belongs to the pyridoxamine 5'-phosphate oxidase family. Homodimer. It depends on FMN as a cofactor.

It catalyses the reaction pyridoxamine 5'-phosphate + O2 + H2O = pyridoxal 5'-phosphate + H2O2 + NH4(+). It carries out the reaction pyridoxine 5'-phosphate + O2 = pyridoxal 5'-phosphate + H2O2. It participates in cofactor metabolism; pyridoxal 5'-phosphate salvage; pyridoxal 5'-phosphate from pyridoxamine 5'-phosphate: step 1/1. The protein operates within cofactor metabolism; pyridoxal 5'-phosphate salvage; pyridoxal 5'-phosphate from pyridoxine 5'-phosphate: step 1/1. Catalyzes the oxidation of either pyridoxine 5'-phosphate (PNP) or pyridoxamine 5'-phosphate (PMP) into pyridoxal 5'-phosphate (PLP). The sequence is that of Pyridoxine/pyridoxamine 5'-phosphate oxidase from Nocardioides sp. (strain ATCC BAA-499 / JS614).